Reading from the N-terminus, the 474-residue chain is tRNA-2-methylthio-N(6)-dimethylallyladenosine synthase (474 aa).

In terms of domain architecture, MTTase N-terminal spans 3–120 (KKLHIKTWGC…LPDMIEQVRR (118 aa)). 6 residues coordinate [4Fe-4S] cluster: C12, C49, C83, C157, C161, and C164. The 233-residue stretch at 143–375 (RAEGPTAFVS…QDRITQQAMR (233 aa)) folds into the Radical SAM core domain. The TRAM domain maps to 378–441 (RHMMGTVQRI…TNSLRGKFIR (64 aa)).

Belongs to the methylthiotransferase family. MiaB subfamily. As to quaternary structure, monomer. [4Fe-4S] cluster serves as cofactor.

The protein resides in the cytoplasm. It catalyses the reaction N(6)-dimethylallyladenosine(37) in tRNA + (sulfur carrier)-SH + AH2 + 2 S-adenosyl-L-methionine = 2-methylsulfanyl-N(6)-dimethylallyladenosine(37) in tRNA + (sulfur carrier)-H + 5'-deoxyadenosine + L-methionine + A + S-adenosyl-L-homocysteine + 2 H(+). In terms of biological role, catalyzes the methylthiolation of N6-(dimethylallyl)adenosine (i(6)A), leading to the formation of 2-methylthio-N6-(dimethylallyl)adenosine (ms(2)i(6)A) at position 37 in tRNAs that read codons beginning with uridine. In Shewanella putrefaciens (strain CN-32 / ATCC BAA-453), this protein is tRNA-2-methylthio-N(6)-dimethylallyladenosine synthase.